A 185-amino-acid chain; its full sequence is Ribosome-recycling factor (185 aa).

It belongs to the RRF family.

The protein localises to the cytoplasm. Its function is as follows. Responsible for the release of ribosomes from messenger RNA at the termination of protein biosynthesis. May increase the efficiency of translation by recycling ribosomes from one round of translation to another. The sequence is that of Ribosome-recycling factor from Proteus mirabilis (strain HI4320).